The following is a 341-amino-acid chain: Glycerol-3-phosphate dehydrogenase [NAD(P)+] (341 aa).

The NADPH site is built by serine 17, tryptophan 18, arginine 37, and lysine 112. Positions 112 and 140 each coordinate sn-glycerol 3-phosphate. An NADPH-binding site is contributed by alanine 144. Sn-glycerol 3-phosphate is bound by residues lysine 195, aspartate 248, serine 258, arginine 259, and asparagine 260. Lysine 195 acts as the Proton acceptor in catalysis. Residue arginine 259 participates in NADPH binding. NADPH is bound by residues valine 283 and glutamate 285.

This sequence belongs to the NAD-dependent glycerol-3-phosphate dehydrogenase family.

The protein resides in the cytoplasm. The enzyme catalyses sn-glycerol 3-phosphate + NAD(+) = dihydroxyacetone phosphate + NADH + H(+). It catalyses the reaction sn-glycerol 3-phosphate + NADP(+) = dihydroxyacetone phosphate + NADPH + H(+). Its pathway is membrane lipid metabolism; glycerophospholipid metabolism. Catalyzes the reduction of the glycolytic intermediate dihydroxyacetone phosphate (DHAP) to sn-glycerol 3-phosphate (G3P), the key precursor for phospholipid synthesis. The protein is Glycerol-3-phosphate dehydrogenase [NAD(P)+] of Mycobacterium avium (strain 104).